The sequence spans 257 residues: Receptor expression-enhancing protein 4 (257 aa).

2 consecutive transmembrane segments (helical) span residues 1-21 and 42-62; these read MVSW…CPAY and WIVF…ISWF. S152 and S194 each carry phosphoserine. Residues 183–257 are disordered; the sequence is PIGYRAGGLQ…KKTVPSDVDS (75 aa). T196 bears the Phosphothreonine mark. S202 bears the Phosphoserine mark. At T250 the chain carries Phosphothreonine. Residue S253 is modified to Phosphoserine.

It belongs to the DP1 family. In terms of tissue distribution, expressed in circumvallate papillae and testis.

The protein resides in the endoplasmic reticulum membrane. Functionally, microtubule-binding protein required to ensure proper cell division and nuclear envelope reassembly by sequestering the endoplasmic reticulum away from chromosomes during mitosis. Probably acts by clearing the endoplasmic reticulum membrane from metaphase chromosomes. In Homo sapiens (Human), this protein is Receptor expression-enhancing protein 4 (REEP4).